We begin with the raw amino-acid sequence, 300 residues long: UDP-3-O-acyl-N-acetylglucosamine deacetylase (300 aa).

The Zn(2+) site is built by histidine 78, histidine 237, and aspartate 241. Histidine 264 acts as the Proton donor in catalysis.

The protein belongs to the LpxC family. Zn(2+) serves as cofactor.

The enzyme catalyses a UDP-3-O-[(3R)-3-hydroxyacyl]-N-acetyl-alpha-D-glucosamine + H2O = a UDP-3-O-[(3R)-3-hydroxyacyl]-alpha-D-glucosamine + acetate. It functions in the pathway glycolipid biosynthesis; lipid IV(A) biosynthesis; lipid IV(A) from (3R)-3-hydroxytetradecanoyl-[acyl-carrier-protein] and UDP-N-acetyl-alpha-D-glucosamine: step 2/6. Catalyzes the hydrolysis of UDP-3-O-myristoyl-N-acetylglucosamine to form UDP-3-O-myristoylglucosamine and acetate, the committed step in lipid A biosynthesis. The protein is UDP-3-O-acyl-N-acetylglucosamine deacetylase of Acinetobacter baumannii (strain ATCC 17978 / DSM 105126 / CIP 53.77 / LMG 1025 / NCDC KC755 / 5377).